Here is a 543-residue protein sequence, read N- to C-terminus: Chaperonin GroEL (543 aa).

ATP is bound by residues Thr-29–Pro-32, Lys-50, Asp-86–Thr-90, Gly-415, and Asp-495.

This sequence belongs to the chaperonin (HSP60) family. In terms of assembly, forms a cylinder of 14 subunits composed of two heptameric rings stacked back-to-back. Interacts with the co-chaperonin GroES.

Its subcellular location is the cytoplasm. The catalysed reaction is ATP + H2O + a folded polypeptide = ADP + phosphate + an unfolded polypeptide.. Together with its co-chaperonin GroES, plays an essential role in assisting protein folding. The GroEL-GroES system forms a nano-cage that allows encapsulation of the non-native substrate proteins and provides a physical environment optimized to promote and accelerate protein folding. This Flavobacterium johnsoniae (strain ATCC 17061 / DSM 2064 / JCM 8514 / BCRC 14874 / CCUG 350202 / NBRC 14942 / NCIMB 11054 / UW101) (Cytophaga johnsonae) protein is Chaperonin GroEL.